The sequence spans 1059 residues: Carbamoyl phosphate synthase large chain (1059 aa).

Residues 1-401 form a carboxyphosphate synthetic domain region; the sequence is MPKRKDIQKV…AMLKAVRSLE (401 aa). Arg-129, Arg-169, Gly-175, Gly-176, Arg-208, Ile-210, Glu-215, Gly-241, Val-242, His-243, Gln-284, and Glu-298 together coordinate ATP. One can recognise an ATP-grasp 1 domain in the interval 133-327; the sequence is KALMERLNEP…IAKMAAKIAV (195 aa). Gln-284, Glu-298, and Asn-300 together coordinate Mg(2+). 3 residues coordinate Mn(2+): Gln-284, Glu-298, and Asn-300. Residues 402 to 546 form an oligomerization domain region; it reads IGVTGLNDLT…YATYERENES (145 aa). Residues 547–929 are carbamoyl phosphate synthetic domain; it reads VRSKKPSVIV…ALYKAFVASN (383 aa). Residues 671–861 enclose the ATP-grasp 2 domain; the sequence is DQVIKTLALP…LAQLATRVML (191 aa). 10 residues coordinate ATP: Arg-707, Ser-746, Leu-748, Glu-752, Gly-777, Val-778, His-779, Ser-780, Gln-820, and Glu-832. Mg(2+)-binding residues include Gln-820, Glu-832, and Asn-834. Residues Gln-820, Glu-832, and Asn-834 each contribute to the Mn(2+) site. In terms of domain architecture, MGS-like spans 930–1059; the sequence is IKVPQYGNVL…SRSFTVNEMK (130 aa). Residues 930–1059 are allosteric domain; that stretch reads IKVPQYGNVL…SRSFTVNEMK (130 aa).

The protein belongs to the CarB family. Composed of two chains; the small (or glutamine) chain promotes the hydrolysis of glutamine to ammonia, which is used by the large (or ammonia) chain to synthesize carbamoyl phosphate. Tetramer of heterodimers (alpha,beta)4. Mg(2+) is required as a cofactor. The cofactor is Mn(2+).

The catalysed reaction is hydrogencarbonate + L-glutamine + 2 ATP + H2O = carbamoyl phosphate + L-glutamate + 2 ADP + phosphate + 2 H(+). It catalyses the reaction hydrogencarbonate + NH4(+) + 2 ATP = carbamoyl phosphate + 2 ADP + phosphate + 2 H(+). It participates in amino-acid biosynthesis; L-arginine biosynthesis; carbamoyl phosphate from bicarbonate: step 1/1. Its pathway is pyrimidine metabolism; UMP biosynthesis via de novo pathway; (S)-dihydroorotate from bicarbonate: step 1/3. In terms of biological role, large subunit of the glutamine-dependent carbamoyl phosphate synthetase (CPSase). CPSase catalyzes the formation of carbamoyl phosphate from the ammonia moiety of glutamine, carbonate, and phosphate donated by ATP, constituting the first step of 2 biosynthetic pathways, one leading to arginine and/or urea and the other to pyrimidine nucleotides. The large subunit (synthetase) binds the substrates ammonia (free or transferred from glutamine from the small subunit), hydrogencarbonate and ATP and carries out an ATP-coupled ligase reaction, activating hydrogencarbonate by forming carboxy phosphate which reacts with ammonia to form carbamoyl phosphate. This is Carbamoyl phosphate synthase large chain from Leuconostoc citreum (strain KM20).